The chain runs to 194 residues: Fibroblast growth factor 7 (194 aa).

A signal peptide spans 1 to 31 (MRKWILTRILPTPLYRPCFHLVCLVGTISLA). N-linked (GlcNAc...) asparagine glycosylation is found at N45 and N149.

The protein belongs to the heparin-binding growth factors family. Interacts with FGFBP1. Interacts with FGFR2. Affinity between fibroblast growth factors (FGFs) and their receptors is increased by heparan sulfate glycosaminoglycans that function as coreceptors.

In terms of biological role, growth factor active on keratinocytes. Possible major paracrine effector of normal epithelial cell proliferation. The protein is Fibroblast growth factor 7 (Fgf7) of Rattus norvegicus (Rat).